The sequence spans 513 residues: ATP synthase subunit alpha 2 (513 aa).

ATP is bound at residue 169–176; that stretch reads GDRQTGKT.

The protein belongs to the ATPase alpha/beta chains family. As to quaternary structure, F-type ATPases have 2 components, CF(1) - the catalytic core - and CF(0) - the membrane proton channel. CF(1) has five subunits: alpha(3), beta(3), gamma(1), delta(1), epsilon(1). CF(0) has three main subunits: a(1), b(2) and c(9-12). The alpha and beta chains form an alternating ring which encloses part of the gamma chain. CF(1) is attached to CF(0) by a central stalk formed by the gamma and epsilon chains, while a peripheral stalk is formed by the delta and b chains.

The protein resides in the cell inner membrane. It carries out the reaction ATP + H2O + 4 H(+)(in) = ADP + phosphate + 5 H(+)(out). Functionally, produces ATP from ADP in the presence of a proton gradient across the membrane. The alpha chain is a regulatory subunit. This Photobacterium profundum (strain SS9) protein is ATP synthase subunit alpha 2.